We begin with the raw amino-acid sequence, 521 residues long: Vang-like protein 2-B (521 aa).

Positions M1–R18 are enriched in low complexity. The disordered stretch occupies residues M1 to T73. At M1–G108 the chain is on the cytoplasmic side. Positions S19–K33 are enriched in basic residues. Basic and acidic residues predominate over residues E57–N67. Residues V109–L129 form a helical membrane-spanning segment. Topologically, residues P130–G147 are extracellular. The helical transmembrane segment at L148–F168 threads the bilayer. Over R169–V178 the chain is Cytoplasmic. The chain crosses the membrane as a helical span at residues F179–F199. Topologically, residues Y200–Y218 are extracellular. The chain crosses the membrane as a helical span at residues A219–L239. The Cytoplasmic portion of the chain corresponds to R240–V521. The PDZ-binding signature appears at E518–V521.

It belongs to the Vang family. Interacts with dvl/dsh. Interacts with prickle3. In terms of tissue distribution, during gastrulation, broadly expressed in the dorsal region in both mesodermal and neural tissues. From the neurula stages, expressed throughout the neural tube. In tailbud stages, expression declines in the anterior notochord but remains strong in the posterior notochord and in the neural tube. Also weakly expressed in the prenephritic region of late tailbud embryos.

The protein resides in the cell membrane. Functionally, has a role in non-canonical Wnt/planar cell polarity (PCP) signaling; can recruit dvl/dsh and prickle from the cytoplasm to the plasma membrane. Acts in a PCP complex to regulate the polarized assembly of fibronectrin on the surface of the mesoderm during gastrulation. Regulates convergent extension in both dorsal mesoderm and neural tissue without affecting cell fate. Regulates neural fold closure during neurulation. May be required for cell surface localization of fzd3 and fzd6 in the inner ear. The polypeptide is Vang-like protein 2-B (vangl2-b) (Xenopus laevis (African clawed frog)).